The primary structure comprises 183 residues: Adenine phosphoribosyltransferase (183 aa).

Belongs to the purine/pyrimidine phosphoribosyltransferase family. As to quaternary structure, homodimer.

The protein localises to the cytoplasm. It catalyses the reaction AMP + diphosphate = 5-phospho-alpha-D-ribose 1-diphosphate + adenine. The protein operates within purine metabolism; AMP biosynthesis via salvage pathway; AMP from adenine: step 1/1. Catalyzes a salvage reaction resulting in the formation of AMP, that is energically less costly than de novo synthesis. The protein is Adenine phosphoribosyltransferase of Shewanella oneidensis (strain ATCC 700550 / JCM 31522 / CIP 106686 / LMG 19005 / NCIMB 14063 / MR-1).